The following is a 198-amino-acid chain: ATP-dependent Clp protease proteolytic subunit 2 (198 aa).

Ser-101 acts as the Nucleophile in catalysis. His-126 is an active-site residue.

It belongs to the peptidase S14 family. In terms of assembly, fourteen ClpP subunits assemble into 2 heptameric rings which stack back to back to give a disk-like structure with a central cavity, resembling the structure of eukaryotic proteasomes.

Its subcellular location is the cytoplasm. The enzyme catalyses Hydrolysis of proteins to small peptides in the presence of ATP and magnesium. alpha-casein is the usual test substrate. In the absence of ATP, only oligopeptides shorter than five residues are hydrolyzed (such as succinyl-Leu-Tyr-|-NHMec, and Leu-Tyr-Leu-|-Tyr-Trp, in which cleavage of the -Tyr-|-Leu- and -Tyr-|-Trp bonds also occurs).. Cleaves peptides in various proteins in a process that requires ATP hydrolysis. Has a chymotrypsin-like activity. Plays a major role in the degradation of misfolded proteins. The chain is ATP-dependent Clp protease proteolytic subunit 2 from Thermosynechococcus vestitus (strain NIES-2133 / IAM M-273 / BP-1).